We begin with the raw amino-acid sequence, 452 residues long: Phosphoglucosamine mutase (452 aa).

Residue S104 is the Phosphoserine intermediate of the active site. Residues S104, D245, D247, and D249 each contribute to the Mg(2+) site. Residue S104 is modified to Phosphoserine.

The protein belongs to the phosphohexose mutase family. Requires Mg(2+) as cofactor. Post-translationally, activated by phosphorylation.

The catalysed reaction is alpha-D-glucosamine 1-phosphate = D-glucosamine 6-phosphate. In terms of biological role, catalyzes the conversion of glucosamine-6-phosphate to glucosamine-1-phosphate. The protein is Phosphoglucosamine mutase of Gluconacetobacter diazotrophicus (strain ATCC 49037 / DSM 5601 / CCUG 37298 / CIP 103539 / LMG 7603 / PAl5).